Consider the following 212-residue polypeptide: Ribosomal RNA small subunit methyltransferase G (212 aa).

S-adenosyl-L-methionine contacts are provided by residues Gly-80, Leu-85, 131 to 132 (AE), and Arg-146.

It belongs to the methyltransferase superfamily. RNA methyltransferase RsmG family.

It localises to the cytoplasm. The enzyme catalyses guanosine(527) in 16S rRNA + S-adenosyl-L-methionine = N(7)-methylguanosine(527) in 16S rRNA + S-adenosyl-L-homocysteine. Functionally, specifically methylates the N7 position of guanine in position 527 of 16S rRNA. The chain is Ribosomal RNA small subunit methyltransferase G from Stenotrophomonas maltophilia (strain K279a).